A 545-amino-acid polypeptide reads, in one-letter code: CTP synthase (545 aa).

Positions 1–266 are amidoligase domain; the sequence is MTTNYIFVTG…DDLVCARFGI (266 aa). A CTP-binding site is contributed by Ser14. UTP is bound at residue Ser14. Residues 15-20 and Asp72 contribute to the ATP site; that span reads SLGKGI. Residues Asp72 and Glu140 each contribute to the Mg(2+) site. CTP-binding positions include 147-149, 187-192, and Lys223; these read DIE and KTKPTQ. Residues 187 to 192 and Lys223 contribute to the UTP site; that span reads KTKPTQ. 239–241 provides a ligand contact to ATP; sequence KDV. The Glutamine amidotransferase type-1 domain occupies 291-542; that stretch reads TIGMVGKYIE…IKAAGENARG (252 aa). Gly352 is a binding site for L-glutamine. Cys379 (nucleophile; for glutamine hydrolysis) is an active-site residue. L-glutamine contacts are provided by residues 380–383, Glu403, and Arg470; that span reads LGMQ. Residues His515 and Glu517 contribute to the active site.

It belongs to the CTP synthase family. In terms of assembly, homotetramer.

It carries out the reaction UTP + L-glutamine + ATP + H2O = CTP + L-glutamate + ADP + phosphate + 2 H(+). The enzyme catalyses L-glutamine + H2O = L-glutamate + NH4(+). The catalysed reaction is UTP + NH4(+) + ATP = CTP + ADP + phosphate + 2 H(+). The protein operates within pyrimidine metabolism; CTP biosynthesis via de novo pathway; CTP from UDP: step 2/2. Its activity is regulated as follows. Allosterically activated by GTP, when glutamine is the substrate; GTP has no effect on the reaction when ammonia is the substrate. The allosteric effector GTP functions by stabilizing the protein conformation that binds the tetrahedral intermediate(s) formed during glutamine hydrolysis. Inhibited by the product CTP, via allosteric rather than competitive inhibition. Its function is as follows. Catalyzes the ATP-dependent amination of UTP to CTP with either L-glutamine or ammonia as the source of nitrogen. Regulates intracellular CTP levels through interactions with the four ribonucleotide triphosphates. This is CTP synthase from Vibrio vulnificus (strain CMCP6).